The chain runs to 603 residues: NADPH-dependent diflavin oxidoreductase 1 (603 aa).

Residues V8–Y152 enclose the Flavodoxin-like domain. FMN-binding positions include S14–A19, S61–G64, L99–N108, and E134. Residues P210–G457 enclose the FAD-binding FR-type domain. Residues R358, R388 to S391, and G429 to S432 contribute to the FAD site. Residues T472, S528–R529, and K534–Q538 contribute to the NADP(+) site. Position 603 (W603) interacts with FAD.

The protein belongs to the NADPH-dependent diflavin oxidoreductase NDOR1 family. In the N-terminal section; belongs to the flavodoxin family. This sequence in the C-terminal section; belongs to the flavoprotein pyridine nucleotide cytochrome reductase family. In terms of assembly, interacts with DRE2; as part of the cytosolic iron-sulfur (Fe-S) protein assembly (CIA) machinery. FAD is required as a cofactor. FMN serves as cofactor.

Its subcellular location is the cytoplasm. It is found in the mitochondrion. It carries out the reaction 2 oxidized [2Fe-2S]-[protein] + NADPH = 2 reduced [2Fe-2S]-[protein] + NADP(+) + H(+). Functionally, NADPH-dependent reductase which is a central component of the cytosolic iron-sulfur (Fe-S) protein assembly (CIA) machinery. Transfers electrons from NADPH via its FAD and FMN prosthetic groups to the [2Fe-2S] cluster of DRE2, another key component of the CIA machinery. In turn, this reduced cluster provides electrons for assembly of cytosolic iron-sulfur cluster proteins. Positively controls H(2)O(2)-induced cell death. The sequence is that of NADPH-dependent diflavin oxidoreductase 1 from Gibberella zeae (strain ATCC MYA-4620 / CBS 123657 / FGSC 9075 / NRRL 31084 / PH-1) (Wheat head blight fungus).